The following is a 111-amino-acid chain: Universal stress protein B (111 aa).

The next 2 helical transmembrane spans lie at 1–21 and 90–110; these read MIST…NMAR and FLLT…MMMW.

It belongs to the universal stress protein B family.

The protein resides in the cell inner membrane. This chain is Universal stress protein B, found in Pectobacterium atrosepticum (strain SCRI 1043 / ATCC BAA-672) (Erwinia carotovora subsp. atroseptica).